Reading from the N-terminus, the 253-residue chain is Triosephosphate isomerase, cytosolic (253 aa).

Substrate-binding residues include asparagine 10 and lysine 12. The Electrophile role is filled by histidine 96. The active-site Proton acceptor is glutamate 166.

This sequence belongs to the triosephosphate isomerase family. In terms of assembly, homodimer.

Its subcellular location is the cytoplasm. It catalyses the reaction D-glyceraldehyde 3-phosphate = dihydroxyacetone phosphate. It functions in the pathway carbohydrate biosynthesis; gluconeogenesis. The protein operates within carbohydrate degradation; glycolysis; D-glyceraldehyde 3-phosphate from glycerone phosphate: step 1/1. The chain is Triosephosphate isomerase, cytosolic from Zea mays (Maize).